We begin with the raw amino-acid sequence, 448 residues long: D-inositol 3-phosphate glycosyltransferase (448 aa).

Residues His35, 46-51 (DAGGLN), Lys104, Tyr137, Thr161, and Arg181 contribute to the 1D-myo-inositol 3-phosphate site. Gly49 lines the UDP-N-acetyl-alpha-D-glucosamine pocket. UDP-N-acetyl-alpha-D-glucosamine is bound by residues Arg255, Lys260, and Met321. Tyr330, Arg331, and Ala333 together coordinate Mg(2+). Residues Glu343 and Glu351 each coordinate UDP-N-acetyl-alpha-D-glucosamine. Thr357 contributes to the Mg(2+) binding site.

This sequence belongs to the glycosyltransferase group 1 family. MshA subfamily. Homodimer.

It catalyses the reaction 1D-myo-inositol 3-phosphate + UDP-N-acetyl-alpha-D-glucosamine = 1D-myo-inositol 2-acetamido-2-deoxy-alpha-D-glucopyranoside 3-phosphate + UDP + H(+). Its function is as follows. Catalyzes the transfer of a N-acetyl-glucosamine moiety to 1D-myo-inositol 3-phosphate to produce 1D-myo-inositol 2-acetamido-2-deoxy-glucopyranoside 3-phosphate in the mycothiol biosynthesis pathway. This chain is D-inositol 3-phosphate glycosyltransferase, found in Acidothermus cellulolyticus (strain ATCC 43068 / DSM 8971 / 11B).